The chain runs to 288 residues: Polyamine aminopropyltransferase (288 aa).

The 230-residue stretch at 9 to 238 (ETLHDQFGQY…GIMTFAWATD (230 aa)) folds into the PABS domain. Q33 is a binding site for S-methyl-5'-thioadenosine. The spermidine site is built by H64 and D88. Residues E108 and 140 to 141 (DG) each bind S-methyl-5'-thioadenosine. The active-site Proton acceptor is the D158. Residue 158-161 (DCTD) participates in spermidine binding. P165 contacts S-methyl-5'-thioadenosine.

Belongs to the spermidine/spermine synthase family. As to quaternary structure, homodimer or homotetramer.

It is found in the cytoplasm. The enzyme catalyses S-adenosyl 3-(methylsulfanyl)propylamine + putrescine = S-methyl-5'-thioadenosine + spermidine + H(+). The protein operates within amine and polyamine biosynthesis; spermidine biosynthesis; spermidine from putrescine: step 1/1. Its function is as follows. Catalyzes the irreversible transfer of a propylamine group from the amino donor S-adenosylmethioninamine (decarboxy-AdoMet) to putrescine (1,4-diaminobutane) to yield spermidine. The sequence is that of Polyamine aminopropyltransferase from Shigella dysenteriae serotype 1 (strain Sd197).